Here is a 338-residue protein sequence, read N- to C-terminus: 1-aminocyclopropane-1-carboxylate deaminase (338 aa).

N6-(pyridoxal phosphate)lysine is present on K51. S78 functions as the Nucleophile in the catalytic mechanism.

Belongs to the ACC deaminase/D-cysteine desulfhydrase family. Homotrimer. Requires pyridoxal 5'-phosphate as cofactor.

The catalysed reaction is 1-aminocyclopropane-1-carboxylate + H2O = 2-oxobutanoate + NH4(+). Functionally, catalyzes a cyclopropane ring-opening reaction, the irreversible conversion of 1-aminocyclopropane-1-carboxylate (ACC) to ammonia and alpha-ketobutyrate. Allows growth on ACC as a nitrogen source. This Ralstonia nicotianae (strain ATCC BAA-1114 / GMI1000) (Ralstonia solanacearum) protein is 1-aminocyclopropane-1-carboxylate deaminase.